Consider the following 643-residue polypeptide: Protein THEMIS2 (643 aa).

CABIT stretches follow at residues 1–238 (MEPV…TASS) and 239–514 (RHVH…KAKG). The segment at 546–631 (EIQAPPPRPP…RQDLDDDEHD (86 aa)) is disordered. Thr593 bears the Phosphothreonine mark. Basic residues predominate over residues 609–619 (PAHRKGHRPAK). A Phosphotyrosine modification is found at Tyr632.

The protein belongs to the themis family. In terms of assembly, interacts with VAV1. Interacts with LAT. Interacts constitutively with GRB2, LYN and PLCG2; these interactions increase the activation of PLCG2 and its downstream pathways following B cell receptor stimulation. In terms of processing, phosphorylation at Tyr-632 is induced by LPS. Phosphorylated by Src kinases (Lck or Fyn) following BCR engagement. As to expression, expressed in different endometrial adenocarcinoma cell lines and various other cell lines apart from the prostate cell line LNCaP and the ovarian cancer cell line BG1.

Its subcellular location is the nucleus. The protein resides in the cytoplasm. Functionally, may constitute a control point in macrophage inflammatory response, promoting LPS-induced TLR4-mediated TNF production. Determines the threshold for activation of B cells by low-affinity and low-avidity ligands via PLCG2 activation and its downstream pathways. In Homo sapiens (Human), this protein is Protein THEMIS2.